Here is a 273-residue protein sequence, read N- to C-terminus: Ribosomal RNA small subunit methyltransferase A (273 aa).

Residues Asn23, Ile25, Gly50, Glu72, Asp97, and Asn116 each coordinate S-adenosyl-L-methionine.

The protein belongs to the class I-like SAM-binding methyltransferase superfamily. rRNA adenine N(6)-methyltransferase family. RsmA subfamily.

The protein resides in the cytoplasm. The enzyme catalyses adenosine(1518)/adenosine(1519) in 16S rRNA + 4 S-adenosyl-L-methionine = N(6)-dimethyladenosine(1518)/N(6)-dimethyladenosine(1519) in 16S rRNA + 4 S-adenosyl-L-homocysteine + 4 H(+). In terms of biological role, specifically dimethylates two adjacent adenosines (A1518 and A1519) in the loop of a conserved hairpin near the 3'-end of 16S rRNA in the 30S particle. May play a critical role in biogenesis of 30S subunits. The protein is Ribosomal RNA small subunit methyltransferase A of Rickettsia akari (strain Hartford).